The following is a 353-amino-acid chain: Holliday junction branch migration complex subunit RuvB (353 aa).

The interval 4-190 is large ATPase domain (RuvB-L); sequence HYIRFKIMTN…FGIPMRLNFY (187 aa). ATP is bound by residues Ile29, Arg30, Gly71, Lys74, Thr75, Thr76, 137-139, Arg180, Tyr190, and Arg227; that span reads EDF. Position 75 (Thr75) interacts with Mg(2+). The segment at 191–261 is small ATPAse domain (RuvB-S); it reads NTEELKKVLN…ISDFGLNRLE (71 aa). Positions 264–353 are head domain (RuvB-H); that stretch reads RIGLDSNDYR…HQFNIFNEHE (90 aa). DNA contacts are provided by Arg300, Arg319, and Arg324.

The protein belongs to the RuvB family. Homohexamer. Forms an RuvA(8)-RuvB(12)-Holliday junction (HJ) complex. HJ DNA is sandwiched between 2 RuvA tetramers; dsDNA enters through RuvA and exits via RuvB. An RuvB hexamer assembles on each DNA strand where it exits the tetramer. Each RuvB hexamer is contacted by two RuvA subunits (via domain III) on 2 adjacent RuvB subunits; this complex drives branch migration. In the full resolvosome a probable DNA-RuvA(4)-RuvB(12)-RuvC(2) complex forms which resolves the HJ.

It is found in the cytoplasm. It carries out the reaction ATP + H2O = ADP + phosphate + H(+). Its function is as follows. The RuvA-RuvB-RuvC complex processes Holliday junction (HJ) DNA during genetic recombination and DNA repair, while the RuvA-RuvB complex plays an important role in the rescue of blocked DNA replication forks via replication fork reversal (RFR). RuvA specifically binds to HJ cruciform DNA, conferring on it an open structure. The RuvB hexamer acts as an ATP-dependent pump, pulling dsDNA into and through the RuvAB complex. RuvB forms 2 homohexamers on either side of HJ DNA bound by 1 or 2 RuvA tetramers; 4 subunits per hexamer contact DNA at a time. Coordinated motions by a converter formed by DNA-disengaged RuvB subunits stimulates ATP hydrolysis and nucleotide exchange. Immobilization of the converter enables RuvB to convert the ATP-contained energy into a lever motion, pulling 2 nucleotides of DNA out of the RuvA tetramer per ATP hydrolyzed, thus driving DNA branch migration. The RuvB motors rotate together with the DNA substrate, which together with the progressing nucleotide cycle form the mechanistic basis for DNA recombination by continuous HJ branch migration. Branch migration allows RuvC to scan DNA until it finds its consensus sequence, where it cleaves and resolves cruciform DNA. The polypeptide is Holliday junction branch migration complex subunit RuvB (Rickettsia massiliae (strain Mtu5)).